Consider the following 82-residue polypeptide: uncharacterized protein (82 aa).

The protein localises to the plastid. It is found in the chloroplast. This is an uncharacterized protein from Vicia faba (Broad bean).